Reading from the N-terminus, the 211-residue chain is Proteasome subunit beta 1 (211 aa).

Residues 1–17 constitute a propeptide, removed in mature form; by autocatalysis; the sequence is MVIMGNELQLENKILKG. Residue T18 is the Nucleophile of the active site.

This sequence belongs to the peptidase T1B family. In terms of assembly, the 20S proteasome core is composed of 14 alpha and 14 beta subunits that assemble into four stacked heptameric rings, resulting in a barrel-shaped structure. The two inner rings, each composed of seven catalytic beta subunits, are sandwiched by two outer rings, each composed of seven alpha subunits. The catalytic chamber with the active sites is on the inside of the barrel. Has a gated structure, the ends of the cylinder being occluded by the N-termini of the alpha-subunits. Is capped at one or both ends by the proteasome regulatory ATPase, PAN.

It is found in the cytoplasm. It catalyses the reaction Cleavage of peptide bonds with very broad specificity.. Its activity is regulated as follows. The formation of the proteasomal ATPase PAN-20S proteasome complex, via the docking of the C-termini of PAN into the intersubunit pockets in the alpha-rings, triggers opening of the gate for substrate entry. Interconversion between the open-gate and close-gate conformations leads to a dynamic regulation of the 20S proteasome proteolysis activity. Component of the proteasome core, a large protease complex with broad specificity involved in protein degradation. This is Proteasome subunit beta 1 from Saccharolobus islandicus (strain M.16.27) (Sulfolobus islandicus).